The chain runs to 32 residues: Ranatuerin-2La (32 aa).

An intrachain disulfide couples Cys27 to Cys32.

As to expression, expressed by the skin glands.

The protein localises to the secreted. Its function is as follows. Antibacterial activity against Gram-positive bacterium S.aureus and Gram-negative bacterium E.coli. Weak activity against C.albicans. This chain is Ranatuerin-2La, found in Rana luteiventris (Columbia spotted frog).